Reading from the N-terminus, the 249-residue chain is MAYATSTYARTSCIILPKIQNGAHFTDDTKAFRRITARRVTRIYASQGPTKPSKPSPGVDTRIHWESPDEGWIGGRSDPAKSVDEDKTNLLSDEKFAELIKDSFDSHYQFLGVSTDADLEEIKSAYRRLSKEYHPDTTSLPLKTASEKFMKLREVYNVLSDEETRRFYDWTLAQEVASRQAEKMRMKLEDPKEQDFRGYESIPDMVDRLGGRNMELSDQAMTALTFDILIVLFAVCCIAFVIVFKDPSY.

The transit peptide at 1 to 45 directs the protein to the chloroplast; it reads MAYATSTYARTSCIILPKIQNGAHFTDDTKAFRRITARRVTRIYA. Residues 44–84 are disordered; it reads YASQGPTKPSKPSPGVDTRIHWESPDEGWIGGRSDPAKSVD. In terms of domain architecture, J spans 106 to 172; the sequence is SHYQFLGVST…ETRRFYDWTL (67 aa). Residues 224 to 244 traverse the membrane as a helical segment; the sequence is LTFDILIVLFAVCCIAFVIVF.

In terms of assembly, part of the chloroplast NDH complex, composed of a mixture of chloroplast and nucleus encoded subunits. Component of the electron donor-binding subcomplex, at least composed of NDHS, NDHT and NDHU.

Its subcellular location is the plastid. The protein resides in the chloroplast thylakoid membrane. It carries out the reaction a plastoquinone + NADH + (n+1) H(+)(in) = a plastoquinol + NAD(+) + n H(+)(out). It catalyses the reaction a plastoquinone + NADPH + (n+1) H(+)(in) = a plastoquinol + NADP(+) + n H(+)(out). Functionally, NDH shuttles electrons from NAD(P)H:plastoquinone, via FMN and iron-sulfur (Fe-S) centers, to quinones in the photosynthetic chain and possibly in a chloroplast respiratory chain. The immediate electron acceptor for the enzyme in this species is believed to be plastoquinone. Couples the redox reaction to proton translocation, and thus conserves the redox energy in a proton gradient. Required for the accumulation of both the NDH subcomplex A and NDHS. This Arabidopsis thaliana (Mouse-ear cress) protein is NAD(P)H-quinone oxidoreductase subunit T, chloroplastic.